Consider the following 494-residue polypeptide: MDASTLFKKVKVKRVLGSLEQQIDDITTDSRTAREGSIFVASVGYTVDSHKFCQSVADQGCKLVVVNKEQSLPANVTQVVVPDTLRVASILAHTLFDYPSHQLVTFGVTGTNGKTSIATMIHLIQRKLQKNSAYLGTNGFQINETKTKGANTTPETVSLTKKIKEAVDAGAESMTLEVSSHGLVLGRLRGVEFDVAIFSNLTQDHLDFHGTMEAYGHAKSLLFSQLGEDLSKEKYVVLNNDDSFSEYLRTVTPYEVFSYGIDEEAQFMAENIQESLQGVSFDFVTPFGTYPVKSPYVGKFNISNIMAAMIAVWSKGTSLETIIKAVENLEPVEGRLEVLDPSLPIDLIIDYAHTADGMNKLIDAVQPFVKQKLIFLVGMAGERDLTKTPEMGRVACRADYVIFTPDNPANDDPKMLTAELAKGATHQNYIEFDDRAEGIKHAIDIAEPGDTVVLASKGREPYQIMPGHIKVPHRDDLIGLEAAYKKFGGGPVGQ.

Ser30 serves as a coordination point for UDP-N-acetyl-alpha-D-muramoyl-L-alanyl-D-glutamate. ATP is bound at residue 110 to 116 (GTNGKTS). UDP-N-acetyl-alpha-D-muramoyl-L-alanyl-D-glutamate contacts are provided by residues 152–153 (TT), Ser179, and Arg187. Position 219 is an N6-carboxylysine (Lys219). The L-lysine recognition motif motif lies at 406–409 (DNPA).

It belongs to the MurCDEF family. MurE subfamily. Post-translationally, carboxylation is probably crucial for Mg(2+) binding and, consequently, for the gamma-phosphate positioning of ATP.

It localises to the cytoplasm. The catalysed reaction is UDP-N-acetyl-alpha-D-muramoyl-L-alanyl-D-glutamate + L-lysine + ATP = UDP-N-acetyl-alpha-D-muramoyl-L-alanyl-gamma-D-glutamyl-L-lysine + ADP + phosphate + H(+). The protein operates within cell wall biogenesis; peptidoglycan biosynthesis. Its function is as follows. Catalyzes the addition of L-lysine to the nucleotide precursor UDP-N-acetylmuramoyl-L-alanyl-D-glutamate (UMAG) in the biosynthesis of bacterial cell-wall peptidoglycan. The sequence is that of UDP-N-acetylmuramoyl-L-alanyl-D-glutamate--L-lysine ligase from Staphylococcus aureus (strain bovine RF122 / ET3-1).